The following is a 290-amino-acid chain: Bifunctional protein FolD (290 aa).

Residues 167-169, Ser192, and Ile233 contribute to the NADP(+) site; that span reads GRS.

It belongs to the tetrahydrofolate dehydrogenase/cyclohydrolase family. As to quaternary structure, homodimer.

It carries out the reaction (6R)-5,10-methylene-5,6,7,8-tetrahydrofolate + NADP(+) = (6R)-5,10-methenyltetrahydrofolate + NADPH. The catalysed reaction is (6R)-5,10-methenyltetrahydrofolate + H2O = (6R)-10-formyltetrahydrofolate + H(+). The protein operates within one-carbon metabolism; tetrahydrofolate interconversion. Its function is as follows. Catalyzes the oxidation of 5,10-methylenetetrahydrofolate to 5,10-methenyltetrahydrofolate and then the hydrolysis of 5,10-methenyltetrahydrofolate to 10-formyltetrahydrofolate. This chain is Bifunctional protein FolD, found in Azorhizobium caulinodans (strain ATCC 43989 / DSM 5975 / JCM 20966 / LMG 6465 / NBRC 14845 / NCIMB 13405 / ORS 571).